The following is a 201-amino-acid chain: MPKISGGKILPIYITGHAVLHAPAKPVTDFSGIQEIVRDMFATMFAAPGVGLAGPQIGLGLRIFVYSYTEGDTLHQGVAINPDLLIPKGVPKRQTHKQQANNSTSCDEPDREGCLSFPGYQFPLERAPQVTLSAFDENKKPFTVHATGWLARIFQHEFDHLQGTLYVDRLAQKYSGEVRQAVLNNKWGIPGKYWVPQEPKE.

Fe cation is bound by residues C114 and H156. Residue E157 is part of the active site. H160 contributes to the Fe cation binding site.

This sequence belongs to the polypeptide deformylase family. Fe(2+) serves as cofactor.

It carries out the reaction N-terminal N-formyl-L-methionyl-[peptide] + H2O = N-terminal L-methionyl-[peptide] + formate. Removes the formyl group from the N-terminal Met of newly synthesized proteins. Requires at least a dipeptide for an efficient rate of reaction. N-terminal L-methionine is a prerequisite for activity but the enzyme has broad specificity at other positions. This Tropheryma whipplei (strain TW08/27) (Whipple's bacillus) protein is Peptide deformylase.